A 184-amino-acid chain; its full sequence is ATP synthase subunit delta (184 aa).

Belongs to the ATPase delta chain family. As to quaternary structure, F-type ATPases have 2 components, F(1) - the catalytic core - and F(0) - the membrane proton channel. F(1) has five subunits: alpha(3), beta(3), gamma(1), delta(1), epsilon(1). CF(0) has four main subunits: a(1), b(1), b'(1) and c(10-14). The alpha and beta chains form an alternating ring which encloses part of the gamma chain. F(1) is attached to F(0) by a central stalk formed by the gamma and epsilon chains, while a peripheral stalk is formed by the delta, b and b' chains.

It localises to the cellular thylakoid membrane. In terms of biological role, f(1)F(0) ATP synthase produces ATP from ADP in the presence of a proton or sodium gradient. F-type ATPases consist of two structural domains, F(1) containing the extramembraneous catalytic core and F(0) containing the membrane proton channel, linked together by a central stalk and a peripheral stalk. During catalysis, ATP synthesis in the catalytic domain of F(1) is coupled via a rotary mechanism of the central stalk subunits to proton translocation. This protein is part of the stalk that links CF(0) to CF(1). It either transmits conformational changes from CF(0) to CF(1) or is implicated in proton conduction. This Synechococcus sp. (strain PCC 6716) protein is ATP synthase subunit delta.